The sequence spans 117 residues: Anti-sigma F factor antagonist (117 aa).

Residues 2–115 (HFQLEMVTRE…QAIDRVRGIV (114 aa)) enclose the STAS domain. A Phosphoserine modification is found at S58.

Belongs to the anti-sigma-factor antagonist family. Post-translationally, phosphorylated by SpoIIAB on a serine residue.

Functionally, in the phosphorylated form it could act as an anti-anti-sigma factor that counteracts SpoIIAB and thus releases sigma f from inhibition. In Lysinibacillus sphaericus (Bacillus sphaericus), this protein is Anti-sigma F factor antagonist (spoIIAA).